Consider the following 892-residue polypeptide: DNA mismatch repair protein MutS (892 aa).

An ATP-binding site is contributed by 607–614 (GPNMSGKS). The disordered stretch occupies residues 833–855 (EESQLSFFGAEQSSKKQDKPALD). Positions 845–855 (SSKKQDKPALD) are enriched in basic and acidic residues.

The protein belongs to the DNA mismatch repair MutS family.

Functionally, this protein is involved in the repair of mismatches in DNA. It is possible that it carries out the mismatch recognition step. This protein has a weak ATPase activity. In Bacillus anthracis (strain A0248), this protein is DNA mismatch repair protein MutS.